Here is a 148-residue protein sequence, read N- to C-terminus: SsrA-binding protein (148 aa).

The protein belongs to the SmpB family.

It is found in the cytoplasm. Its function is as follows. Required for rescue of stalled ribosomes mediated by trans-translation. Binds to transfer-messenger RNA (tmRNA), required for stable association of tmRNA with ribosomes. tmRNA and SmpB together mimic tRNA shape, replacing the anticodon stem-loop with SmpB. tmRNA is encoded by the ssrA gene; the 2 termini fold to resemble tRNA(Ala) and it encodes a 'tag peptide', a short internal open reading frame. During trans-translation Ala-aminoacylated tmRNA acts like a tRNA, entering the A-site of stalled ribosomes, displacing the stalled mRNA. The ribosome then switches to translate the ORF on the tmRNA; the nascent peptide is terminated with the 'tag peptide' encoded by the tmRNA and targeted for degradation. The ribosome is freed to recommence translation, which seems to be the essential function of trans-translation. In Mycoplasma mycoides subsp. mycoides SC (strain CCUG 32753 / NCTC 10114 / PG1), this protein is SsrA-binding protein.